The following is a 589-amino-acid chain: Aspartate--tRNA ligase (589 aa).

Residue E172 participates in L-aspartate binding. An aspartate region spans residues 196 to 199; the sequence is QLFK. Residue R218 participates in L-aspartate binding. ATP contacts are provided by residues 218–220 and Q227; that span reads RDE. H449 is a binding site for L-aspartate. Residue E483 coordinates ATP. R490 is an L-aspartate binding site. Position 535–538 (535–538) interacts with ATP; sequence GLDR.

Belongs to the class-II aminoacyl-tRNA synthetase family. Type 1 subfamily. As to quaternary structure, homodimer.

Its subcellular location is the cytoplasm. It carries out the reaction tRNA(Asp) + L-aspartate + ATP = L-aspartyl-tRNA(Asp) + AMP + diphosphate. Functionally, catalyzes the attachment of L-aspartate to tRNA(Asp) in a two-step reaction: L-aspartate is first activated by ATP to form Asp-AMP and then transferred to the acceptor end of tRNA(Asp). The chain is Aspartate--tRNA ligase from Actinobacillus succinogenes (strain ATCC 55618 / DSM 22257 / CCUG 43843 / 130Z).